The primary structure comprises 29 residues: Cycloviolacin-O22 (29 aa).

Residues 1-29 (GLPICGETCVGGTCNTPGCTCSWPVCTRN) constitute a cross-link (cyclopeptide (Gly-Asn)). Intrachain disulfides connect Cys-5–Cys-19, Cys-9–Cys-21, and Cys-14–Cys-26.

This is a cyclic peptide. In terms of tissue distribution, expressed in roots and runners but not in leaves, petals and petioles (at protein level).

Its function is as follows. Probably participates in a plant defense mechanism. This is Cycloviolacin-O22 from Viola odorata (Sweet violet).